We begin with the raw amino-acid sequence, 95 residues long: Ribonuclease kappa-B (95 aa).

Helical transmembrane passes span 12-32 (GLIISVWGIIQLVLMGLFFYI) and 68-88 (CWIAACIYVLTLLLSAQQFYV).

This sequence belongs to the RNase K family.

It localises to the membrane. Inhibited by Zn(2+) and Hg(2+), while it is unaffected by Ca(2+). Functionally, endoribonuclease which displays activity against poly(C) and poly(U) synthetic substrates, as well as rRNA. The polypeptide is Ribonuclease kappa-B (Ceratitis capitata (Mediterranean fruit fly)).